A 188-amino-acid chain; its full sequence is Probable DNA-directed RNA polymerase subunit delta (188 aa).

The 70-residue stretch at 14–83 folds into the HTH HARE-type domain; sequence LSMIEVARAI…GDNKWGLRSW (70 aa). A disordered region spans residues 117–188; that stretch reads GDEDAIDYSD…EDDEDDEEEE (72 aa).

This sequence belongs to the RpoE family. As to quaternary structure, RNAP is composed of a core of 2 alpha, a beta and a beta' subunits. The core is associated with a delta subunit and one of several sigma factors.

Functionally, participates in both the initiation and recycling phases of transcription. In the presence of the delta subunit, RNAP displays an increased specificity of transcription, a decreased affinity for nucleic acids, and an increased efficiency of RNA synthesis because of enhanced recycling. The chain is Probable DNA-directed RNA polymerase subunit delta from Streptococcus uberis (strain ATCC BAA-854 / 0140J).